The following is a 574-amino-acid chain: Actin-binding protein wsp1 (574 aa).

The region spanning 19–130 is the WH1 domain; sequence IPKSTNKIIA…KKVLDKGCHP (112 aa). Disordered regions lie at residues 144–186, 221–494, and 517–574; these read KGSS…ELLN, AGTP…IAEL, and KSRK…DEWD. Residues 149-158 show a composition bias toward polar residues; sequence HAPNNSNIQP. 2 stretches are compositionally biased toward pro residues: residues 230–240 and 251–260; these read PPIPPSIPSSR and PAPPPIPPPS. Low complexity-rich tracts occupy residues 297–306 and 324–335; these read SRVSAAALAA and KPPIGNGSSNSS. Over residues 352–368 the composition is skewed to pro residues; it reads PLPPQGRSAPPPPPPRS. S386 bears the Phosphoserine mark. Pro residues predominate over residues 415 to 485; the sequence is PPVPTPPSLP…PPPAPAPAPA (71 aa). The WH2 domain maps to 499–518; sequence GRANLMASIRASGGMDLLKS. The segment covering 521–545 has biased composition (polar residues); sequence VSASPSVASTKTSNPPVEAPPSNNL. Over residues 563–574 the composition is skewed to acidic residues; that stretch reads SDEEDEDDDEWD.

In terms of assembly, interacts with vrp1.

It localises to the cytoplasm. Its subcellular location is the cytoskeleton. Functionally, has a role in regulating actin assembly, so regulating polarized growth. The polypeptide is Actin-binding protein wsp1 (wsp1) (Schizosaccharomyces pombe (strain 972 / ATCC 24843) (Fission yeast)).